We begin with the raw amino-acid sequence, 102 residues long: MASQTIRIRLKSYEHGILDESAAKIVATAKRTGAEISGPVPLPTERTLFTVLRSPHKNKDSREQFEMRTHKRLIDILNPTPKTVDSLMKLDLPSGVDIEIKL.

Belongs to the universal ribosomal protein uS10 family. In terms of assembly, part of the 30S ribosomal subunit.

Functionally, involved in the binding of tRNA to the ribosomes. This Lactobacillus helveticus (strain DPC 4571) protein is Small ribosomal subunit protein uS10.